The primary structure comprises 343 residues: MEISKQTSDLLLSLEKKKGTLPKFSVLRSIPRNRIIYGAPGTGKSNYLEREVGKIFGDNPYVFTRVTFFPGYTYGQFIGAYKPVPIYKKLSGEEEIFSSNFRDKMENFEPMIDYQFVPGPFIDVLIKALKNRYTNFILIIEEINRANAASVFGDIFQLLDRNKNGESDYPVTFGPDIMNYLARNGIKDEMIKLPSNFFIWATMNNADQGVLPLDTAFKRRWSFEYLELEKYRKAVDSWKLSLRYKGHNKVIMWNDFRDIINKRLKGKVPEDKLLGPFFLKESELWNQNVFKNKLLYYLKEDVFKHNPTIDFLNASTFSELIEKYDGSDNIFTFDIDDSSFVSD.

BsuMI restriction activity requires YdiR, YdiS and YdjA.

It carries out the reaction Endonucleolytic cleavage of DNA to give specific double-stranded fragments with terminal 5'-phosphates.. Its function is as follows. A P subtype restriction enzyme that recognizes the double-stranded sequence 5'-CTCGAG-3'; the cleavage site is unknown. This chain is Type II restriction enzyme BsuMI component YdiS (ydiS), found in Bacillus subtilis (strain 168).